The chain runs to 100 residues: Urease subunit gamma (100 aa).

The protein belongs to the urease gamma subunit family. In terms of assembly, heterotrimer of UreA (gamma), UreB (beta) and UreC (alpha) subunits. Three heterotrimers associate to form the active enzyme.

The protein localises to the cytoplasm. It carries out the reaction urea + 2 H2O + H(+) = hydrogencarbonate + 2 NH4(+). Its pathway is nitrogen metabolism; urea degradation; CO(2) and NH(3) from urea (urease route): step 1/1. This chain is Urease subunit gamma, found in Pseudarthrobacter chlorophenolicus (strain ATCC 700700 / DSM 12829 / CIP 107037 / JCM 12360 / KCTC 9906 / NCIMB 13794 / A6) (Arthrobacter chlorophenolicus).